We begin with the raw amino-acid sequence, 318 residues long: Homoserine O-succinyltransferase (318 aa).

Residue cysteine 142 is the Acyl-thioester intermediate of the active site. Substrate-binding residues include lysine 163 and serine 192. The Proton acceptor role is filled by histidine 235. Residue glutamate 237 is part of the active site. Residue arginine 249 coordinates substrate.

Belongs to the MetA family.

The protein resides in the cytoplasm. The enzyme catalyses L-homoserine + succinyl-CoA = O-succinyl-L-homoserine + CoA. The protein operates within amino-acid biosynthesis; L-methionine biosynthesis via de novo pathway; O-succinyl-L-homoserine from L-homoserine: step 1/1. Functionally, transfers a succinyl group from succinyl-CoA to L-homoserine, forming succinyl-L-homoserine. This chain is Homoserine O-succinyltransferase, found in Shewanella putrefaciens (strain CN-32 / ATCC BAA-453).